A 128-amino-acid chain; its full sequence is Large ribosomal subunit protein uL18 (128 aa).

The protein belongs to the universal ribosomal protein uL18 family. Part of the 50S ribosomal subunit; part of the 5S rRNA/L5/L18/L25 subcomplex. Contacts the 5S and 23S rRNAs.

Functionally, this is one of the proteins that bind and probably mediate the attachment of the 5S RNA into the large ribosomal subunit, where it forms part of the central protuberance. In Acidothermus cellulolyticus (strain ATCC 43068 / DSM 8971 / 11B), this protein is Large ribosomal subunit protein uL18.